We begin with the raw amino-acid sequence, 147 residues long: Ribonuclease P protein component (147 aa).

A disordered region spans residues 117–147 (TRPRGQSSHRTRASREATSAHTTAVGEQPTQ).

The protein belongs to the RnpA family. As to quaternary structure, consists of a catalytic RNA component (M1 or rnpB) and a protein subunit.

It carries out the reaction Endonucleolytic cleavage of RNA, removing 5'-extranucleotides from tRNA precursor.. RNaseP catalyzes the removal of the 5'-leader sequence from pre-tRNA to produce the mature 5'-terminus. It can also cleave other RNA substrates such as 4.5S RNA. The protein component plays an auxiliary but essential role in vivo by binding to the 5'-leader sequence and broadening the substrate specificity of the ribozyme. The protein is Ribonuclease P protein component of Thermobifida fusca (strain YX).